We begin with the raw amino-acid sequence, 216 residues long: Probable nicotinate-nucleotide adenylyltransferase (216 aa).

Belongs to the NadD family.

The catalysed reaction is nicotinate beta-D-ribonucleotide + ATP + H(+) = deamido-NAD(+) + diphosphate. Its pathway is cofactor biosynthesis; NAD(+) biosynthesis; deamido-NAD(+) from nicotinate D-ribonucleotide: step 1/1. Functionally, catalyzes the reversible adenylation of nicotinate mononucleotide (NaMN) to nicotinic acid adenine dinucleotide (NaAD). This Klebsiella pneumoniae (strain 342) protein is Probable nicotinate-nucleotide adenylyltransferase.